We begin with the raw amino-acid sequence, 600 residues long: MVNNMTDLTAQDAAWSTRDHLDDPVIGELRNRFGPDAFTVQATRTGIPVVWVKREQLLEVGDFLKKLPKPYVMLFDLHGMDERLRTHRDGLPAADFSVFYHLISIERNRDIMLKVALSENDLRVPTFTKLFPNANWYERETWEMFGIDIEGHPHLTRIMMPQTWEGHPLRKDYPARATEFDPFELTKAKQDLEMEALTFKPEDWGMKRGTDNEDFMFLNLGPNHPSAHGAFRIILQLDGEEIVDCVPDIGYHHRGAEKMGERQSWHSYIPYTDRIEYLGGCVNEMPYVLAVEKLAGITVPDRVNVIRVMLSELFRINSHLLYISTFIQDVGAMTPVFFAFTDRQKIYDLVEAITGFRMHPAWFRIGGVAHDLPRGWDRLLREFLEWMPKRLDSYEKAALRNTILKGRSQGVAAYGAKEALEWGTTGAGLRATGIDFDVRKWRPYSGYENFDFEVPVGGGVSDCYTRVMLKVEELRQSLRILQQCLDNMPEGPFKADHPLTTPPPKERTLQHIETLITHFLQVSWGPVMPAQESFQMVEATKGINSYYLTSDGSTMSYRTRVRTPSFAHLQQIPSAIRGSLVSDLIVYLGSIDFVMSDVDR.

The interval 1–190 is NADH dehydrogenase I subunit C; it reads MVNNMTDLTA…DPFELTKAKQ (190 aa). The interval 214–600 is NADH dehydrogenase I subunit D; that stretch reads DFMFLNLGPN…IDFVMSDVDR (387 aa).

In the N-terminal section; belongs to the complex I 30 kDa subunit family. It in the C-terminal section; belongs to the complex I 49 kDa subunit family. In terms of assembly, NDH-1 is composed of 13 different subunits. Subunits NuoB, CD, E, F, and G constitute the peripheral sector of the complex.

It is found in the cell inner membrane. The enzyme catalyses a quinone + NADH + 5 H(+)(in) = a quinol + NAD(+) + 4 H(+)(out). NDH-1 shuttles electrons from NADH, via FMN and iron-sulfur (Fe-S) centers, to quinones in the respiratory chain. The immediate electron acceptor for the enzyme in this species is believed to be ubiquinone. Couples the redox reaction to proton translocation (for every two electrons transferred, four hydrogen ions are translocated across the cytoplasmic membrane), and thus conserves the redox energy in a proton gradient. The chain is NADH-quinone oxidoreductase subunit C/D from Salmonella paratyphi A (strain ATCC 9150 / SARB42).